The following is a 444-amino-acid chain: UDP-N-acetylmuramoylalanine--D-glutamate ligase (444 aa).

ATP is bound at residue 113–119; it reads GSNGKST.

This sequence belongs to the MurCDEF family.

Its subcellular location is the cytoplasm. It carries out the reaction UDP-N-acetyl-alpha-D-muramoyl-L-alanine + D-glutamate + ATP = UDP-N-acetyl-alpha-D-muramoyl-L-alanyl-D-glutamate + ADP + phosphate + H(+). Its pathway is cell wall biogenesis; peptidoglycan biosynthesis. In terms of biological role, cell wall formation. Catalyzes the addition of glutamate to the nucleotide precursor UDP-N-acetylmuramoyl-L-alanine (UMA). This chain is UDP-N-acetylmuramoylalanine--D-glutamate ligase, found in Blochmanniella floridana.